A 259-amino-acid chain; its full sequence is Hydroxyethylthiazole kinase (259 aa).

Position 50 (Met-50) interacts with substrate. ATP is bound by residues Arg-122 and Thr-168. Gly-195 contacts substrate.

Belongs to the Thz kinase family. Requires Mg(2+) as cofactor.

It catalyses the reaction 5-(2-hydroxyethyl)-4-methylthiazole + ATP = 4-methyl-5-(2-phosphooxyethyl)-thiazole + ADP + H(+). The protein operates within cofactor biosynthesis; thiamine diphosphate biosynthesis; 4-methyl-5-(2-phosphoethyl)-thiazole from 5-(2-hydroxyethyl)-4-methylthiazole: step 1/1. In terms of biological role, catalyzes the phosphorylation of the hydroxyl group of 4-methyl-5-beta-hydroxyethylthiazole (THZ). This is Hydroxyethylthiazole kinase from Escherichia coli O127:H6 (strain E2348/69 / EPEC).